The following is an 873-amino-acid chain: Zinc fingers and homeoboxes protein 1 (873 aa).

A disordered region spans residues M1–N63. Positions Q18–E30 are enriched in acidic residues. Phosphothreonine is present on T36. Phosphoserine occurs at positions 45, 47, and 48. C2H2-type zinc fingers lie at residues Y70–H93 and Y102–H125. A Glycyl lysine isopeptide (Lys-Gly) (interchain with G-Cter in SUMO2) cross-link involves residue K159. Positions V198 to A247 are disordered. Residue S202 is modified to Phosphoserine. A compositionally biased stretch (basic and acidic residues) spans S207–N221. Residues E223 to T238 show a composition bias toward low complexity. Positions N272–P432 are required for dimerization. The required for interaction with NFYA stretch occupies residues N272–F564. A DNA-binding region (homeobox 1) is located at residues N284–E346. Residues Q430–P455 are disordered. Residues K441 and K485 each participate in a glycyl lysine isopeptide (Lys-Gly) (interchain with G-Cter in SUMO2) cross-link. The homeobox 2 DNA-binding region spans S464–Q526. 3 disordered regions span residues I540 to A568, D627 to I664, and S731 to N767. Positions A551–S560 are enriched in low complexity. Residues P569–E631 constitute a DNA-binding region (homeobox 3). A Glycyl lysine isopeptide (Lys-Gly) (interchain with G-Cter in SUMO2) cross-link involves residue K629. A Phosphoserine modification is found at S648. Residues G660–W722 constitute a DNA-binding region (homeobox 4). Residues L734–T768 form a required for nuclear localization region. Over residues L740–K764 the composition is skewed to basic residues. S774 is subject to Phosphoserine. A DNA-binding region (homeobox 5) is located at residues K777–F832. The segment at I829–D873 is disordered. A compositionally biased stretch (acidic residues) spans L831–T857. Residues L831–D873 form a required for repressor activity region. The span at H863 to D873 shows a compositional bias: basic residues.

The protein belongs to the ZHX family. As to quaternary structure, forms homodimers. Heterodimer (via HD1 domain) with ZHX2 (via HD1 domain). Also forms a heterodimer with ZHX3 which is a prerequisite for repressor activity. Interacts with ATF7IP and NFYA. Interacts (via homeobox domains) with DNMT3B (via PWWP domain). In terms of tissue distribution, ubiquitously expressed.

It is found in the nucleus. Its function is as follows. Acts as a transcriptional repressor. Increases DNMT3B-mediated repressive transcriptional activity when DNMT3B is tethered to DNA. May link molecule between DNMT3B and other co-repressor proteins. This chain is Zinc fingers and homeoboxes protein 1 (Zhx1), found in Rattus norvegicus (Rat).